The following is a 232-amino-acid chain: Orotidine 5'-phosphate decarboxylase (232 aa).

Substrate-binding positions include Asp-12, Lys-34, 61–70, Thr-116, Arg-177, Gln-186, Gly-206, and Arg-207; that span reads DMKLLDIDNT. The active-site Proton donor is Lys-63.

Belongs to the OMP decarboxylase family. Type 1 subfamily. As to quaternary structure, homodimer.

The catalysed reaction is orotidine 5'-phosphate + H(+) = UMP + CO2. It functions in the pathway pyrimidine metabolism; UMP biosynthesis via de novo pathway; UMP from orotate: step 2/2. Its function is as follows. Catalyzes the decarboxylation of orotidine 5'-monophosphate (OMP) to uridine 5'-monophosphate (UMP). The chain is Orotidine 5'-phosphate decarboxylase from Sinorhizobium medicae (strain WSM419) (Ensifer medicae).